The chain runs to 329 residues: Synaptonemal complex central element protein 1 (329 aa).

Positions 1–33 are disordered; sequence MATRPQPLSVEPEGSADLLHGPEGARGRRGSTQ. Coiled-coil stretches lie at residues 28-168 and 194-294; these read RRGS…ETLM and KEQL…ILAQ. Residues 295–329 form a disordered region; sequence IQSTQKEEDSSWRTASPKPLEAHKETVQERPSSRT. Positions 314–329 are enriched in basic and acidic residues; sequence LEAHKETVQERPSSRT.

This sequence belongs to the SYCE family. In terms of assembly, homodimer. Found in a complex with SYCP1 and SYCE2. Interacts with SYCP1, SYCE2 and SYCE3. Interacts with SIX6OS1.

It localises to the nucleus. Its subcellular location is the chromosome. In terms of biological role, major component of the transverse central element of synaptonemal complexes (SCS), formed between homologous chromosomes during meiotic prophase. Requires SYCP1 in order to be incorporated into the central element. May have a role in the synaptonemal complex assembly, stabilization and recombination. This Rattus norvegicus (Rat) protein is Synaptonemal complex central element protein 1 (Syce1).